A 958-amino-acid polypeptide reads, in one-letter code: MPVRRGHVAPQNTYLDTIIRKFEGQSRKFLIANAQMENCAIIYCNDGFCELFGYSRVEVMQQPCTCDFLTGPNTPSSAVSRLAQALLGAEECKVDILYYRKDASSFRCLVDVVPVKNEDGAVIMFILNFEDLAQLLAKCSSRSLSQRLLSQSFLGSEGSHGRPGGPGPGTGRGKYRTISQIPQFTLNFVEFNLEKHRSSSTTEIEIIAPHKVVERTQNVTEKVTQVLSLGADVLPEYKLQAPRIHRWTILHYSPFKAVWDWLILLLVIYTAVFTPYSAAFLLSDQDESRRGACSYTCSPLTVVDLIVDIMFVVDIVINFRTTYVNTNDEVVSHPRRIAVHYFKGWFLIDMVAAIPFDLLIFRTGSDETTTLIGLLKTARLLRLVRVARKLDRYSEYGAAVLFLLMCTFALIAHWLACIWYAIGNVERPYLEHKIGWLDSLGVQLGKRYNGSDPASGPSVQDKYVTALYFTFSSLTSVGFGNVSPNTNSEKVFSICVMLIGSLMYASIFGNVSAIIQRLYSGTARYHTQMLRVKEFIRFHQIPNPLRQRLEEYFQHAWSYTNGIDMNAVLKGFPECLQADICLHLHRALLQHCPAFSGAGKGCLRALAVKFKTTHAPPGDTLVHLGDVLSTLYFISRGSIEILRDDVVVAILGKNDIFGEPVSLHAQPGKSSADVRALTYCDLHKIQRADLLEVLDMYPAFAESFWSKLEVTFNLRDAAGGLHSSPRQAPGSQDHQGFFLSDNQSDAAPPLSISDASGLWPELLQEMPPRHSPQSPQEDPDCWPLKLGSRLEQLQAQMNRLESRVSSDLSRILQLLQKPMPQGHASYILEAPASNDLALVPIASETTSPGPRLPQGFLPPAQTPSYGDLDDCSPKHRNSSPRMPHLAVATDKTLAPSSEQEQPEGLWPPLASPLHPLEVQGLICGPCFSSLPEHLGSVPKQLDFQRHGSDPGFAGSWGH.

Over 1–261 (MPVRRGHVAP…YSPFKAVWDW (261 aa)) the chain is Cytoplasmic. One can recognise a PAS domain in the interval 41–70 (IIYCNDGFCELFGYSRVEVMQQPCTCDFLT). Residues 92–144 (CKVDILYYRKDASSFRCLVDVVPVKNEDGAVIMFILNFEDLAQLLAKCSSRSL) form the PAC domain. Residues 262–282 (LILLLVIYTAVFTPYSAAFLL) form a helical membrane-spanning segment. At 283 to 298 (SDQDESRRGACSYTCS) the chain is on the extracellular side. Residues 299–319 (PLTVVDLIVDIMFVVDIVINF) form a helical membrane-spanning segment. Residues 320–340 (RTTYVNTNDEVVSHPRRIAVH) lie on the Cytoplasmic side of the membrane. The chain crosses the membrane as a helical span at residues 341–361 (YFKGWFLIDMVAAIPFDLLIF). Topologically, residues 362-370 (RTGSDETTT) are extracellular. The helical; Voltage-sensor transmembrane segment at 371-391 (LIGLLKTARLLRLVRVARKLD) threads the bilayer. Residues 392-398 (RYSEYGA) lie on the Cytoplasmic side of the membrane. A helical transmembrane segment spans residues 399–419 (AVLFLLMCTFALIAHWLACIW). The Extracellular segment spans residues 420-463 (YAIGNVERPYLEHKIGWLDSLGVQLGKRYNGSDPASGPSVQDKY). N-linked (GlcNAc...) (complex) asparagine glycosylation occurs at N449. Positions 464-484 (VTALYFTFSSLTSVGFGNVSP) form an intramembrane region, pore-forming. Positions 476–481 (SVGFGN) match the Selectivity filter motif. Residues 485-490 (NTNSEK) are Extracellular-facing. A helical membrane pass occupies residues 491–511 (VFSICVMLIGSLMYASIFGNV). The Cytoplasmic portion of the chain corresponds to 512–958 (SAIIQRLYSG…DPGFAGSWGH (447 aa)). A cNMP-binding domain region spans residues 594–694 (AFSGAGKGCL…IQRADLLEVL (101 aa)). Disordered stretches follow at residues 720 to 751 (GLHS…PPLS) and 845 to 910 (TTSP…PPLA). Positions 724 to 745 (SPRQAPGSQDHQGFFLSDNQSD) are enriched in polar residues.

Belongs to the potassium channel family. H (Eag) (TC 1.A.1.20) subfamily. Kv11.2/KCNH6 sub-subfamily. The potassium channel is probably composed of a homo- or heterotetrameric complex of pore-forming alpha subunits that can associate only within their subfamily. As to expression, expressed in prolactin-secreting adenomas.

Its subcellular location is the cell membrane. It catalyses the reaction K(+)(in) = K(+)(out). Functionally, pore-forming (alpha) subunit of voltage-gated inwardly rectifying potassium channel. Characterized by unusual gating kinetics by producing relatively small outward currents during membrane depolarization and large inward currents during subsequent repolarization which reflect a rapid inactivation during depolarization and quick recovery from inactivation but slow deactivation (closing) during repolarization. Activates even more slowly than KCNH2. The protein is Voltage-gated inwardly rectifying potassium channel KCNH6 of Homo sapiens (Human).